The following is a 426-amino-acid chain: Glutamyl-tRNA reductase (426 aa).

Residues 52–55, Ser-110, 115–117, and Gln-121 each bind substrate; these read TCNR and EYE. The Nucleophile role is filled by Cys-53. NADP(+) is bound at residue 190–195; that stretch reads GAGEMA.

The protein belongs to the glutamyl-tRNA reductase family. In terms of assembly, homodimer.

The catalysed reaction is (S)-4-amino-5-oxopentanoate + tRNA(Glu) + NADP(+) = L-glutamyl-tRNA(Glu) + NADPH + H(+). The protein operates within porphyrin-containing compound metabolism; protoporphyrin-IX biosynthesis; 5-aminolevulinate from L-glutamyl-tRNA(Glu): step 1/2. Functionally, catalyzes the NADPH-dependent reduction of glutamyl-tRNA(Glu) to glutamate 1-semialdehyde (GSA). This is Glutamyl-tRNA reductase from Saccharolobus solfataricus (strain ATCC 35092 / DSM 1617 / JCM 11322 / P2) (Sulfolobus solfataricus).